A 907-amino-acid polypeptide reads, in one-letter code: HMG box transcription factor BBX (907 aa).

Residues 1–19 (MKGSNRNKDHSTEGEGDGK) are compositionally biased toward basic and acidic residues. Disordered stretches follow at residues 1–24 (MKGSNRNKDHSTEGEGDGKRPKRK), 37–80 (LDFS…EQRA), 152–185 (TTNKPVKSPTPTVNPRKKLWAFPPDSSRDLPTPK), and 220–242 (TPEASSGTCRPDISESPELRQKS). Acidic residues-rich tracts occupy residues 39–52 (FSEEEEEDEEEEDI) and 61–75 (DGLEQDVAETEDDES). Residues 80 to 148 (ARRPMNAFLL…AFMKANPGYR (69 aa)) constitute a DNA-binding region (HMG box). The span at 152–164 (TTNKPVKSPTPTV) shows a compositional bias: polar residues. Ser242 carries the post-translational modification Phosphoserine. Lys384 is covalently cross-linked (Glycyl lysine isopeptide (Lys-Gly) (interchain with G-Cter in SUMO2)). 3 disordered regions span residues 435–483 (IIED…DIES), 495–612 (DWGV…SERS), and 628–672 (TSLR…KKFK). A compositionally biased stretch (basic residues) spans 447 to 457 (KIKKKKKKNKL). A phosphoserine mark is found at Ser476 and Ser483. Composition is skewed to basic and acidic residues over residues 496–506 (WGVDKLGETPR) and 534–550 (KKVSKEKCSDITKESRP). Residue Lys571 forms a Glycyl lysine isopeptide (Lys-Gly) (interchain with G-Cter in SUMO2) linkage. The segment covering 591–612 (KPEDSDCHRKTETCGSRKSERS) has biased composition (basic and acidic residues). Polar residues predominate over residues 656-668 (ESWTFNQSGTSGS). Lys693 is covalently cross-linked (Glycyl lysine isopeptide (Lys-Gly) (interchain with G-Cter in SUMO2)). A Phosphoserine modification is found at Ser701. Disordered regions lie at residues 708–736 (KCVSTPRKKKKTGNMSSESTKTSKGSGDK), 769–854 (NALS…SSTP), and 877–907 (VHRGQRSTPLTHDGQPKEMPQAPVLISCADQ). Over residues 723–732 (SSESTKTSKG) the composition is skewed to low complexity. Residues 772–783 (SIPNTPEPTTMQ) show a composition bias toward polar residues. Ser789 carries the phosphoserine modification. A compositionally biased stretch (basic residues) spans 790–801 (QKRKARKTKITH). Ser811 is subject to Phosphoserine.

It is found in the nucleus. Transcription factor that is necessary for cell cycle progression from G1 to S phase. The protein is HMG box transcription factor BBX (Bbx) of Mus musculus (Mouse).